The primary structure comprises 798 residues: Phenylalanine--tRNA ligase beta subunit (798 aa).

In terms of domain architecture, tRNA-binding spans 38–148 (IGNYEKVVVG…PEAPVGEKIE (111 aa)). Residues 400–475 (FTPKVIAVSL…RYLGYNNFPD (76 aa)) form the B5 domain. Mg(2+) contacts are provided by D453, D459, E462, and E463. The region spanning 703–796 (SPYPEVKRDI…LEAKTGAKLR (94 aa)) is the FDX-ACB domain.

The protein belongs to the phenylalanyl-tRNA synthetase beta subunit family. Type 1 subfamily. As to quaternary structure, tetramer of two alpha and two beta subunits. Mg(2+) is required as a cofactor.

It localises to the cytoplasm. The catalysed reaction is tRNA(Phe) + L-phenylalanine + ATP = L-phenylalanyl-tRNA(Phe) + AMP + diphosphate + H(+). The polypeptide is Phenylalanine--tRNA ligase beta subunit (Carboxydothermus hydrogenoformans (strain ATCC BAA-161 / DSM 6008 / Z-2901)).